Consider the following 556-residue polypeptide: Glutamine--tRNA ligase (556 aa).

The 'HIGH' region signature appears at 34–44; it reads PEPNGYLHIGH. ATP contacts are provided by residues 35 to 37 and 41 to 47; these read EPN and HIGHAKS. Residues D67 and Y212 each coordinate L-glutamine. ATP contacts are provided by residues T231, 263–264, and 271–273; these read RL and MSK. The 'KMSKS' region signature appears at 270–274; sequence VMSKR.

This sequence belongs to the class-I aminoacyl-tRNA synthetase family. In terms of assembly, monomer.

Its subcellular location is the cytoplasm. It catalyses the reaction tRNA(Gln) + L-glutamine + ATP = L-glutaminyl-tRNA(Gln) + AMP + diphosphate. The chain is Glutamine--tRNA ligase from Nitrosomonas europaea (strain ATCC 19718 / CIP 103999 / KCTC 2705 / NBRC 14298).